Reading from the N-terminus, the 101-residue chain is Small ribosomal subunit protein uS14 (101 aa).

Belongs to the universal ribosomal protein uS14 family. In terms of assembly, part of the 30S ribosomal subunit. Contacts proteins S3 and S10.

Functionally, binds 16S rRNA, required for the assembly of 30S particles and may also be responsible for determining the conformation of the 16S rRNA at the A site. This Baumannia cicadellinicola subsp. Homalodisca coagulata protein is Small ribosomal subunit protein uS14.